Reading from the N-terminus, the 257-residue chain is 5'-nucleotidase SurE (257 aa).

Residues D9, D10, S40, and N92 each coordinate a divalent metal cation.

This sequence belongs to the SurE nucleotidase family. It depends on a divalent metal cation as a cofactor.

The protein localises to the cytoplasm. The catalysed reaction is a ribonucleoside 5'-phosphate + H2O = a ribonucleoside + phosphate. Nucleotidase that shows phosphatase activity on nucleoside 5'-monophosphates. The sequence is that of 5'-nucleotidase SurE from Alkalilimnicola ehrlichii (strain ATCC BAA-1101 / DSM 17681 / MLHE-1).